A 309-amino-acid polypeptide reads, in one-letter code: Calponin-2 (309 aa).

At Ser-2 the chain carries N-acetylserine. 2 positions are modified to N6-acetyllysine: Lys-8 and Lys-25. In terms of domain architecture, Calponin-homology (CH) spans 28 to 132 (PQKEAELRSW…SLLALAGKAK (105 aa)). Residue Ser-138 is modified to Phosphoserine. 3 Calponin-like repeats span residues 166-191 (IGLQMGTNKCASQSGMTAYGTRRHLY), 206-231 (ISLQMGTNKCASQVGMTAPGTRRHIY), and 245-269 (MSLQMGYTQGANQSGQVFGLGRQIY). Residues 273–309 (YCPQGPAADGAPAAAGDGPGPGEPSECPPYYQEEAGY) form a disordered region. The span at 277-288 (GPAADGAPAAAG) shows a compositional bias: low complexity.

The protein belongs to the calponin family.

Functionally, thin filament-associated protein that is implicated in the regulation and modulation of smooth muscle contraction. It is capable of binding to actin, calmodulin and tropomyosin. The interaction of calponin with actin inhibits the actomyosin Mg-ATPase activity. This Bos taurus (Bovine) protein is Calponin-2 (CNN2).